Here is a 298-residue protein sequence, read N- to C-terminus: MTYFTIKSAAMSPDDDAPSPDINSLGRLMSHSEVESRGNGYEVLQQAGTVRILLSRPERGNALSLSLARDLTRLFQTFSAQHSVHRIVLTGKGKYFCSGMDLGEELYEDATERCLALQDLFGAIDACPKTTIAVINGPAFGGGVGLAFVCDIRVAVSTSFFCLSEVKLGLCPATVSRFIVREWGVSLARMAMLTARKIQPQTLHEMGVLHAVALDEEALEAVTRDVLNDLRFAAPQATAWCKVLTRKTRNANSDHDQLARQIFEAMVVAGSESEYGVAQFRLGNKNICWEQVECRHIG.

This sequence belongs to the enoyl-CoA hydratase/isomerase family.

The protein operates within mycotoxin biosynthesis. Functionally, enoyl-CoA hydratase; part of the gene clusters that mediate the biosynthesis of the host-selective toxins (HSTs) ACT-toxins responsible for brown spot of tangerine disease by the tangerine pathotype which affects tangerines and mandarins. ACT-toxins consist of three moieties, 9,10-epoxy-8-hydroxy-9-methyl-decatrienoic acid (EDA), valine and a polyketide. ACT-toxin I is toxic to both citrus and pear; toxin II the 5''-deoxy derivative of ACT-toxin I, is highly toxic to pear and slightly toxic to citrus. On cellular level, ACT-toxins affect plasma membrane of susceptible cells and cause a sudden increase in loss of K(+) after a few minutes of toxin treatment. The acyl-CoA ligase ACTT1, the hydrolase ACTT2, the enoyl-CoA hydratases ACTT3 and ACTT6, and the acyl-CoA synthetase ACTT5 are all involved in the biosynthesis of the AK-, AF- and ACT-toxin common 9,10-epoxy-8-hydroxy-9-methyl-decatrienoic acid (EDA) structural moiety. The exact role of each enzyme, and of additional enzymes identified within the AF-toxin clusters have still to be determined. On the other hand, ACTTS1 to ACTTS4 are specific to the tangerine pathotype. The function of ACTTS3 is to elongate the polyketide chain portion of ACT-toxin that is unique to this toxin. The enoyl-reductase ACTTS2 might complement the missing enoyl-reductase (ER) domain in ACTTS3 in the synthesis of the polyketide portion of ACT-toxin. The roles of the nonribosomal peptide synthetases-related proteins ACTTS1 and ACTTS4 have also still not been elucidated. This Alternaria alternata (Alternaria rot fungus) protein is Enoyl-CoA hydratase ACTT6.